The chain runs to 235 residues: Urease accessory protein UreF (235 aa).

This sequence belongs to the UreF family. UreD, UreF and UreG form a complex that acts as a GTP-hydrolysis-dependent molecular chaperone, activating the urease apoprotein by helping to assemble the nickel containing metallocenter of UreC. The UreE protein probably delivers the nickel.

The protein resides in the cytoplasm. Required for maturation of urease via the functional incorporation of the urease nickel metallocenter. In Haemophilus influenzae (strain 86-028NP), this protein is Urease accessory protein UreF.